Here is a 350-residue protein sequence, read N- to C-terminus: Heat-inducible transcription repressor HrcA (350 aa).

It belongs to the HrcA family.

Its function is as follows. Negative regulator of class I heat shock genes (grpE-dnaK-dnaJ and groELS operons). Prevents heat-shock induction of these operons. This Xanthomonas campestris pv. campestris (strain ATCC 33913 / DSM 3586 / NCPPB 528 / LMG 568 / P 25) protein is Heat-inducible transcription repressor HrcA.